The chain runs to 104 residues: L-rhamnose mutarotase (104 aa).

Tyr18 serves as a coordination point for substrate. His22 functions as the Proton donor in the catalytic mechanism. Substrate contacts are provided by residues Tyr41 and 76 to 77 (WW).

It belongs to the rhamnose mutarotase family. As to quaternary structure, homodimer.

It localises to the cytoplasm. It catalyses the reaction alpha-L-rhamnose = beta-L-rhamnose. It participates in carbohydrate metabolism; L-rhamnose metabolism. Its function is as follows. Involved in the anomeric conversion of L-rhamnose. The sequence is that of L-rhamnose mutarotase from Escherichia coli O17:K52:H18 (strain UMN026 / ExPEC).